Consider the following 70-residue polypeptide: Exodeoxyribonuclease 7 small subunit (70 aa).

It belongs to the XseB family. Heterooligomer composed of large and small subunits.

The protein localises to the cytoplasm. It catalyses the reaction Exonucleolytic cleavage in either 5'- to 3'- or 3'- to 5'-direction to yield nucleoside 5'-phosphates.. Functionally, bidirectionally degrades single-stranded DNA into large acid-insoluble oligonucleotides, which are then degraded further into small acid-soluble oligonucleotides. This chain is Exodeoxyribonuclease 7 small subunit, found in Streptococcus pneumoniae serotype 2 (strain D39 / NCTC 7466).